Here is a 113-residue protein sequence, read N- to C-terminus: Nitrogenase vanadium-iron protein delta chain (113 aa).

In terms of assembly, hexamer of two alpha, two beta, and two delta chains. The cofactor is iron-sulfur cluster. Vanadium cation serves as cofactor.

The catalysed reaction is N2 + 8 reduced [2Fe-2S]-[ferredoxin] + 16 ATP + 16 H2O = H2 + 8 oxidized [2Fe-2S]-[ferredoxin] + 2 NH4(+) + 16 ADP + 16 phosphate + 6 H(+). Functionally, the key enzymatic reactions in nitrogen fixation are catalyzed by the nitrogenase complex, which has 2 components: the iron protein (component 2) and a component 1 which is either a molybdenum-iron protein, a vanadium-iron, or an iron-iron protein. The polypeptide is Nitrogenase vanadium-iron protein delta chain (vnfG) (Azotobacter vinelandii).